A 337-amino-acid chain; its full sequence is Glucokinase (337 aa).

Position 11 to 16 (11 to 16 (ADIGGT)) interacts with ATP.

Belongs to the bacterial glucokinase family.

It localises to the cytoplasm. The enzyme catalyses D-glucose + ATP = D-glucose 6-phosphate + ADP + H(+). The polypeptide is Glucokinase (Xylella fastidiosa (strain M12)).